Reading from the N-terminus, the 207-residue chain is Large ribosomal subunit protein uL4 (207 aa).

The tract at residues 45 to 80 is disordered; that stretch reads RQGTHAVKNRSEVRGGGRKPWRQKGTGRARQGSTRS. The segment covering 60–71 has biased composition (basic residues); it reads GGRKPWRQKGTG.

It belongs to the universal ribosomal protein uL4 family. Part of the 50S ribosomal subunit.

Functionally, one of the primary rRNA binding proteins, this protein initially binds near the 5'-end of the 23S rRNA. It is important during the early stages of 50S assembly. It makes multiple contacts with different domains of the 23S rRNA in the assembled 50S subunit and ribosome. Forms part of the polypeptide exit tunnel. The sequence is that of Large ribosomal subunit protein uL4 from Oceanobacillus iheyensis (strain DSM 14371 / CIP 107618 / JCM 11309 / KCTC 3954 / HTE831).